The sequence spans 524 residues: uncharacterized protein (524 aa).

The N-terminal stretch at 1 to 21 (MLLRSVWYKLGSLLIILPLTG) is a signal peptide. Cysteine 22 is lipidated: N-palmitoyl cysteine. The S-diacylglycerol cysteine moiety is linked to residue cysteine 22.

It belongs to the MG067/MG068/MG395 family.

The protein resides in the cell membrane. This is an uncharacterized protein from Mycoplasma pneumoniae (strain ATCC 29342 / M129 / Subtype 1) (Mycoplasmoides pneumoniae).